Reading from the N-terminus, the 430-residue chain is Trigger factor (430 aa).

Residues 164 to 249 form the PPIase FKBP-type domain; the sequence is DDWAVIDHEG…LKALKTRQLP (86 aa).

Belongs to the FKBP-type PPIase family. Tig subfamily.

It localises to the cytoplasm. It carries out the reaction [protein]-peptidylproline (omega=180) = [protein]-peptidylproline (omega=0). Involved in protein export. Acts as a chaperone by maintaining the newly synthesized protein in an open conformation. Functions as a peptidyl-prolyl cis-trans isomerase. This is Trigger factor from Anaeromyxobacter sp. (strain Fw109-5).